The sequence spans 149 residues: Small ribosomal subunit protein uS15 (149 aa).

The segment covering 1-14 (MGRMHTHRHGKSHS) has biased composition (basic residues). The disordered stretch occupies residues 1 to 20 (MGRMHTHRHGKSHSIRPATL).

The protein belongs to the universal ribosomal protein uS15 family. Part of the 30S ribosomal subunit.

The chain is Small ribosomal subunit protein uS15 from Nitrosopumilus maritimus (strain SCM1).